We begin with the raw amino-acid sequence, 114 residues long: Large ribosomal subunit protein bL20 (114 aa).

The protein belongs to the bacterial ribosomal protein bL20 family.

Binds directly to 23S ribosomal RNA and is necessary for the in vitro assembly process of the 50S ribosomal subunit. It is not involved in the protein synthesizing functions of that subunit. The chain is Large ribosomal subunit protein bL20 from Flavobacterium psychrophilum (strain ATCC 49511 / DSM 21280 / CIP 103535 / JIP02/86).